We begin with the raw amino-acid sequence, 586 residues long: Merlin (586 aa).

Ser9 carries the phosphoserine modification. Positions 18–307 (FTVRIVTMDA…GNHDLFMRRR (290 aa)) constitute an FERM domain. Positions 325–354 (KARKQMERQRLAREKQMREEAERSRDEPER) are disordered. A Phosphoserine; by PAK modification is found at Ser514. The disordered stretch occupies residues 557–586 (LHSEHSDSGTSSKHNTIKKPQAQGRRPICI).

Interacts with NHERF1, HGS and AGAP2. Interacts with SGSM3. Interacts (via FERM domain) with MPP1. Interacts with LAYN and WWC1. Interacts with the CUL4A-RBX1-DDB1-VprBP/DCAF1 E3 ubiquitin-protein ligase complex. The unphosphorylated form interacts (via FERM domain) with VPRBP/DCAF1. Interacts (via FERM domain) with NOP53; the interaction is direct. Interacts with SCHIP1; the interaction is direct. In terms of processing, ubiquitinated by the CUL4A-RBX1-DDB1-DCAF1/VprBP E3 ubiquitin-protein ligase complex for ubiquitination and subsequent proteasome-dependent degradation. Post-translationally, phosphorylation of Ser-514 inhibits nuclear localization by disrupting the intramolecular association of the FERM domain with the C-terminal tail. The dephosphorylation of Ser-514 favors the interaction with NOP53.

The protein localises to the cell membrane. The protein resides in the cell projection. Its subcellular location is the cytoplasm. It is found in the cytoskeleton. It localises to the nucleus. Its function is as follows. Probable regulator of the Hippo/SWH (Sav/Wts/Hpo) signaling pathway, a signaling pathway that plays a pivotal role in tumor suppression by restricting proliferation and promoting apoptosis. Along with WWC1 can synergistically induce the phosphorylation of LATS1 and LATS2 and can probably function in the regulation of the Hippo/SWH (Sav/Wts/Hpo) signaling pathway. May act as a membrane stabilizing protein. May inhibit PI3 kinase by binding to AGAP2 and impairing its stimulating activity. Suppresses cell proliferation and tumorigenesis by inhibiting the CUL4A-RBX1-DDB1-VprBP/DCAF1 E3 ubiquitin-protein ligase complex Plays a role in lens development and is required for complete fiber cell terminal differentiation, maintenance of cell polarity and separation of the lens vesicle from the corneal epithelium. The chain is Merlin (Nf2) from Rattus norvegicus (Rat).